The chain runs to 255 residues: MVMSSYMVNSKYVDPKFPPCEEYLQGGYLGEQGADYYGGGAQGADFQPPGLYPRPDFGEQPFGGSGPGPGSALPARGHGQEPGGPGGHYAAPGEPCPAPPAPPPAPLPGAPACSQSDPKQPPPGTALKQPAVVYPWMKKVHVNSVNPNYTGGEPKRSRTAYTRQQVLELEKEFHFNRYLTRRRRIEIAHTLCLSERQIKIWFQNRRMKWKKDHKLPNTKGRSSSSSSSSSCSSSVAPSQHLQPMAKDHHTDLTTL.

Residues 31 to 128 (EQGADYYGGG…KQPPPGTALK (98 aa)) are disordered. The segment covering 94–109 (EPCPAPPAPPPAPLPG) has biased composition (pro residues). The Antp-type hexapeptide motif lies at 133–138 (VYPWMK). Residues 154–213 (PKRSRTAYTRQQVLELEKEFHFNRYLTRRRRIEIAHTLCLSERQIKIWFQNRRMKWKKDH) constitute a DNA-binding region (homeobox). Residues 212–255 (DHKLPNTKGRSSSSSSSSSCSSSVAPSQHLQPMAKDHHTDLTTL) form a disordered region. A compositionally biased stretch (low complexity) spans 222 to 234 (SSSSSSSSSCSSS). A compositionally biased stretch (basic and acidic residues) spans 245-255 (AKDHHTDLTTL).

Belongs to the Antp homeobox family. Deformed subfamily. As to quaternary structure, forms a DNA-binding heterodimer with transcription factor PBX1.

The protein resides in the nucleus. Sequence-specific transcription factor which is part of a developmental regulatory system that provides cells with specific positional identities on the anterior-posterior axis. The polypeptide is Homeobox protein Hox-D4 (HOXD4) (Gorilla gorilla gorilla (Western lowland gorilla)).